Reading from the N-terminus, the 117-residue chain is Large ribosomal subunit protein uL22 (117 aa).

This sequence belongs to the universal ribosomal protein uL22 family. In terms of assembly, part of the 50S ribosomal subunit.

Functionally, this protein binds specifically to 23S rRNA; its binding is stimulated by other ribosomal proteins, e.g. L4, L17, and L20. It is important during the early stages of 50S assembly. It makes multiple contacts with different domains of the 23S rRNA in the assembled 50S subunit and ribosome. Its function is as follows. The globular domain of the protein is located near the polypeptide exit tunnel on the outside of the subunit, while an extended beta-hairpin is found that lines the wall of the exit tunnel in the center of the 70S ribosome. The protein is Large ribosomal subunit protein uL22 of Chlorobium phaeobacteroides (strain BS1).